The primary structure comprises 451 residues: Phosphoglucosamine mutase (451 aa).

The active-site Phosphoserine intermediate is S102. Residues S102, D243, D245, and D247 each contribute to the Mg(2+) site. Residue S102 is modified to Phosphoserine.

The protein belongs to the phosphohexose mutase family. The cofactor is Mg(2+). In terms of processing, activated by phosphorylation.

It carries out the reaction alpha-D-glucosamine 1-phosphate = D-glucosamine 6-phosphate. Functionally, catalyzes the conversion of glucosamine-6-phosphate to glucosamine-1-phosphate. This is Phosphoglucosamine mutase from Paramagnetospirillum magneticum (strain ATCC 700264 / AMB-1) (Magnetospirillum magneticum).